The following is a 322-amino-acid chain: Probable transposase for insertion sequence element ISA1214 (322 aa).

This sequence belongs to the transposase 11 family.

Functionally, involved in the transposition of the insertion sequence ISA1214. This chain is Probable transposase for insertion sequence element ISA1214, found in Archaeoglobus fulgidus (strain ATCC 49558 / DSM 4304 / JCM 9628 / NBRC 100126 / VC-16).